A 732-amino-acid polypeptide reads, in one-letter code: Photosystem I P700 chlorophyll a apoprotein A1 (732 aa).

A run of 8 helical transmembrane segments spans residues 61–84 (VFSSGLAHFSIVFFWLGGMHFHGA), 145–168 (LKYAAAAALIGSIATLWAAYFHMH), 185–209 (NAGQLAILAGLGSISWAGHQIHIAL), 278–296 (IASHHFFVGITCIISGIIA), 317–340 (WHSRLSINLAIAGSLSITFAHHIY), 356–382 (LSLFVHHMWIGGFFIVGAGAHASIFMI), 414–436 (IIMGHLIYVTIALGMHAFGIYIH), and 510–528 (FMVHHIHAFTIHCTLLILM). 2 residues coordinate [4Fe-4S] cluster: Cys-552 and Cys-561. 2 helical membrane passes run 568–589 (HVFLGVFWMYNSLSIVIFHFFW) and 644–666 (LSGYGLIFLGAHFTWAFSLMFLW). His-655 contacts chlorophyll a'. Chlorophyll a-binding residues include Met-663 and Tyr-671. Position 672 (Trp-672) interacts with phylloquinone. A helical transmembrane segment spans residues 704–724 (AVGLVHYMLGGIGTTWAFFLA).

This sequence belongs to the PsaA/PsaB family. In terms of assembly, the PsaA/B heterodimer binds the P700 chlorophyll special pair and subsequent electron acceptors. PSI consists of a core antenna complex that captures photons, and an electron transfer chain that converts photonic excitation into a charge separation. The eukaryotic PSI reaction center is composed of at least 11 subunits. It depends on P700 is a chlorophyll a/chlorophyll a' dimer, A0 is one or more chlorophyll a, A1 is one or both phylloquinones and FX is a shared 4Fe-4S iron-sulfur center. as a cofactor.

The protein resides in the plastid. It is found in the chloroplast thylakoid membrane. The catalysed reaction is reduced [plastocyanin] + hnu + oxidized [2Fe-2S]-[ferredoxin] = oxidized [plastocyanin] + reduced [2Fe-2S]-[ferredoxin]. In terms of biological role, psaA and PsaB bind P700, the primary electron donor of photosystem I (PSI), as well as the electron acceptors A0, A1 and FX. PSI is a plastocyanin/cytochrome c6-ferredoxin oxidoreductase, converting photonic excitation into a charge separation, which transfers an electron from the donor P700 chlorophyll pair to the spectroscopically characterized acceptors A0, A1, FX, FA and FB in turn. Oxidized P700 is reduced on the lumenal side of the thylakoid membrane by plastocyanin or cytochrome c6. The polypeptide is Photosystem I P700 chlorophyll a apoprotein A1 (Heterocapsa triquetra (Dinoflagellate)).